The chain runs to 156 residues: Crossover junction endodeoxyribonuclease RuvC (156 aa).

Residues Asp7, Glu67, and Asp139 contribute to the active site. Asp7, Glu67, and Asp139 together coordinate Mg(2+).

The protein belongs to the RuvC family. Homodimer which binds Holliday junction (HJ) DNA. The HJ becomes 2-fold symmetrical on binding to RuvC with unstacked arms; it has a different conformation from HJ DNA in complex with RuvA. In the full resolvosome a probable DNA-RuvA(4)-RuvB(12)-RuvC(2) complex forms which resolves the HJ. Requires Mg(2+) as cofactor.

Its subcellular location is the cytoplasm. It catalyses the reaction Endonucleolytic cleavage at a junction such as a reciprocal single-stranded crossover between two homologous DNA duplexes (Holliday junction).. In terms of biological role, the RuvA-RuvB-RuvC complex processes Holliday junction (HJ) DNA during genetic recombination and DNA repair. Endonuclease that resolves HJ intermediates. Cleaves cruciform DNA by making single-stranded nicks across the HJ at symmetrical positions within the homologous arms, yielding a 5'-phosphate and a 3'-hydroxyl group; requires a central core of homology in the junction. The consensus cleavage sequence is 5'-(A/T)TT(C/G)-3'. Cleavage occurs on the 3'-side of the TT dinucleotide at the point of strand exchange. HJ branch migration catalyzed by RuvA-RuvB allows RuvC to scan DNA until it finds its consensus sequence, where it cleaves and resolves the cruciform DNA. The polypeptide is Crossover junction endodeoxyribonuclease RuvC (Sphingopyxis alaskensis (strain DSM 13593 / LMG 18877 / RB2256) (Sphingomonas alaskensis)).